The chain runs to 392 residues: Quinolinate synthase (392 aa).

The tract at residues 1-23 is disordered; the sequence is MVDLPTTTPPAQPTTGNDEVDAL. His57 and Ser74 together coordinate iminosuccinate. Residue Cys131 coordinates [4Fe-4S] cluster. Iminosuccinate is bound by residues 163 to 165 and Ser184; that span reads YIN. Cys254 serves as a coordination point for [4Fe-4S] cluster. Iminosuccinate is bound by residues 280-282 and Thr297; that span reads HPE. Cys344 is a binding site for [4Fe-4S] cluster.

The protein belongs to the quinolinate synthase family. Type 3 subfamily. The cofactor is [4Fe-4S] cluster.

The protein localises to the cytoplasm. It catalyses the reaction iminosuccinate + dihydroxyacetone phosphate = quinolinate + phosphate + 2 H2O + H(+). The protein operates within cofactor biosynthesis; NAD(+) biosynthesis; quinolinate from iminoaspartate: step 1/1. Functionally, catalyzes the condensation of iminoaspartate with dihydroxyacetone phosphate to form quinolinate. This Rhodopirellula baltica (strain DSM 10527 / NCIMB 13988 / SH1) protein is Quinolinate synthase.